We begin with the raw amino-acid sequence, 219 residues long: Transmembrane protein 247 (219 aa).

Composition is skewed to basic and acidic residues over residues 1–10 and 29–45; these read MAAEDREMME and SKSE…ESQK. The disordered stretch occupies residues 1-101; that stretch reads MAAEDREMME…LPPTPGTERN (101 aa). A coiled-coil region spans residues 121-156; sequence LHEKNQRQRQHEVVMEQLQRERQHEVVMEQLQQEAA. 2 helical membrane-spanning segments follow: residues 167 to 187 and 194 to 214; these read FLLP…IHII and VFFL…LCLI.

It localises to the membrane. This chain is Transmembrane protein 247 (TMEM247), found in Homo sapiens (Human).